A 245-amino-acid polypeptide reads, in one-letter code: Bis(5'-nucleosyl)-tetraphosphatase PrpE [asymmetrical] (245 aa).

Belongs to the PrpE family. Ni(2+) serves as cofactor.

The enzyme catalyses P(1),P(4)-bis(5'-guanosyl) tetraphosphate + H2O = GMP + GTP + 2 H(+). Functionally, asymmetrically hydrolyzes Ap4p to yield AMP and ATP. This is Bis(5'-nucleosyl)-tetraphosphatase PrpE [asymmetrical] from Anoxybacillus flavithermus (strain DSM 21510 / WK1).